Reading from the N-terminus, the 398-residue chain is Streptopain (398 aa).

The first 27 residues, 1 to 27 (MNKKKLGIRLLSLLALGGFVLANPVFA), serve as a signal peptide directing secretion. Residues 28–145 (DQNFARNEKE…TTYAGTAEIK (118 aa)) constitute a propeptide that is removed on maturation. Catalysis depends on Cys-192, which acts as the Nucleophile. At Cys-192 the chain carries Cysteine methyl disulfide; in zymogen form. 2 residues coordinate a protein: Ser-282 and Gly-339. The active-site Proton acceptor is the His-340. The tract at residues 368 to 390 (RLDALNPSALGTGGGAGGFNGYQ) is C-terminal active site loop.

This sequence belongs to the peptidase C10 family. In terms of assembly, monomer. Post-translationally, the mature protease is derived from the precursor sequence by cleavage, either in cis via an autocatalytic mechanism, or in trans by mature SpeB or host proteases (trypsin, plasmin or subtilisin). Maturation can involve a number of protein cleavage intermediates. Mature SpeB probably plays the most important role in protein maturation in physiological conditions. Methylthiolation at Cys-192 of the inactive zymogen form is probably involved in the mechanism of secretion of the proteinase into the culture fluid.

It is found in the secreted. It localises to the host extracellular space. Its subcellular location is the host cytoplasm. It carries out the reaction Preferential cleavage with hydrophobic residues at P2, P1 and P1'.. With respect to regulation, synthesized as an inactive zymogen to protect the intracellular components of the bacteria from proteolytic activity during protein production. Once secreted into the extracellular milieu, cleaved into the active protease: maturation can be mediated in cis by autocatalytic cleavage, or in trans by mature SpeB or host proteases. Protease activity is strongly inhibited by zinc and copper, which prevent its maturation into an active protease: inhibition by metal ions may be required to prevent proteolysis of streptococcal proteins. Functionally, cysteine protease that acts as a key streptococcal virulence factor by cleaving host proteins involved in immune response. Triggers inflammation by mediating cleavage of host proteins, which can both promote host pathogenesis by triggering sterile inflammation and/or restrict streptococcal infection, depending on host immune statue and infection site. Cleaves host gasdermin-A (GSDMA) in epithelial cells, promoting GSDMA activation and formation of gasdermin pores, triggering pyroptosis. Pyroptosis triggers the elimination of the infected skin cell, depriving the pathogen of its protective niche, while inducing an inflammatory response. This ultimately prevents bacterial penetration of the epithelial barrier and a subsequent systemic dissemination of the pathogen. Also mediates cleavage of the cytokine precursor interleukin-1 beta (IL1B) to its mature form, resulting in inflammation and septic shock. SpeB-mediated maturation of IL1B plays a dual role depending on infection site: while IL1B inflammatory response prevents bacterial growth during invasive skin infections, it promotes streptococcal infection of the nasopharynx by disrupting colonization resistance mediated by the microbiota. Inhibits host autophagy be catalyzing cleavage and inactivation of key autophagy factors, such as CALCOCO2, NBR1 and SQSTM1. Cleaves and inhibits a number of complement factors, such as C2, C3-beta chain of C3, C4, C5 or SERPING1, thereby promoting evasion of host immunity. May also impair adaptive immunity by catalyzing cleavage and degradation of host immunoglobulins to promote immune system evasion; the relevance of this activity is however unsure in vivo. Catalyzes maturation and release of the peptide hormone bradykinin from the precursor Kininogen-1 (KNG1) to produce hypotension during septic shock. Also involved in bacterial translocation across the host epithelial barrier by mediating cleavage and degradation of host epithelial junction proteins, such as CDH1 and OCLN. Additionally, has been involved in degradation of fibronectin and vitronectin, two host extracellular matrix proteins involved in tissue integrity. Also able to catalyze cleavage and degradation of streptococcal proteins, such as C5a peptidase, EndoS or SmeZ. Degradation of streptococcal proteins is however strictly regulated to preserve integrity of other virulence factors. The polypeptide is Streptopain (speB) (Streptococcus pyogenes serotype M28 (strain MGAS6180)).